The sequence spans 698 residues: MOXD1 homolog 1 (698 aa).

An N-terminal signal peptide occupies residues 1-20 (MSVQDVLWIVLTVQLSFGLA). Asn-36, Asn-140, and Asn-221 each carry an N-linked (GlcNAc...) asparagine glycan. A DOMON domain is found at 54-174 (GLYWLKWWIN…DTFKVLWSIG (121 aa)). The active site involves Tyr-232. Cu cation contacts are provided by His-265 and His-266. Residues Cys-272 and Cys-309 are joined by a disulfide bond. Residues His-347, His-425, and His-427 each contribute to the Cu cation site. Cystine bridges form between Cys-403-Cys-516 and Cys-479-Cys-501. His-425 is a catalytic residue. Asn-465 is a glycosylation site (N-linked (GlcNAc...) asparagine). Residue Met-500 coordinates Cu cation. Asn-538 and Asn-561 each carry an N-linked (GlcNAc...) asparagine glycan.

This sequence belongs to the copper type II ascorbate-dependent monooxygenase family. Cu(2+) serves as cofactor.

It is found in the secreted. This is MOXD1 homolog 1 from Drosophila melanogaster (Fruit fly).